The sequence spans 411 residues: Dihydrofolate synthase/folylpolyglutamate synthase (411 aa).

53–56 (GKGT) is a binding site for ATP. Ser-77 is a Mg(2+) binding site. Residues 116–119 (TYFE) and 147–149 (LDA) contribute to the 7,8-dihydropteroate site. Position 167 (His-167) interacts with Mg(2+). 2 residues coordinate ATP: Arg-283 and Asp-296.

This sequence belongs to the folylpolyglutamate synthase family. Monomer. Mg(2+) is required as a cofactor.

The enzyme catalyses 7,8-dihydropteroate + L-glutamate + ATP = 7,8-dihydrofolate + ADP + phosphate + H(+). The catalysed reaction is (6S)-5,6,7,8-tetrahydrofolyl-(gamma-L-Glu)(n) + L-glutamate + ATP = (6S)-5,6,7,8-tetrahydrofolyl-(gamma-L-Glu)(n+1) + ADP + phosphate + H(+). It carries out the reaction 10-formyltetrahydrofolyl-(gamma-L-Glu)(n) + L-glutamate + ATP = 10-formyltetrahydrofolyl-(gamma-L-Glu)(n+1) + ADP + phosphate + H(+). It catalyses the reaction (6R)-5,10-methylenetetrahydrofolyl-(gamma-L-Glu)(n) + L-glutamate + ATP = (6R)-5,10-methylenetetrahydrofolyl-(gamma-L-Glu)(n+1) + ADP + phosphate + H(+). It participates in cofactor biosynthesis; tetrahydrofolate biosynthesis; 7,8-dihydrofolate from 2-amino-4-hydroxy-6-hydroxymethyl-7,8-dihydropteridine diphosphate and 4-aminobenzoate: step 2/2. Its pathway is cofactor biosynthesis; tetrahydrofolylpolyglutamate biosynthesis. In terms of biological role, functions in two distinct reactions of the de novo folate biosynthetic pathway. Catalyzes the addition of a glutamate residue to dihydropteroate (7,8-dihydropteroate or H2Pte) to form dihydrofolate (7,8-dihydrofolate monoglutamate or H2Pte-Glu). Also catalyzes successive additions of L-glutamate to tetrahydrofolate or 10-formyltetrahydrofolate or 5,10-methylenetetrahydrofolate, leading to folylpolyglutamate derivatives. The chain is Dihydrofolate synthase/folylpolyglutamate synthase (folC) from Buchnera aphidicola subsp. Acyrthosiphon pisum (strain APS) (Acyrthosiphon pisum symbiotic bacterium).